Consider the following 707-residue polypeptide: Molybdenum cofactor sulfurase (707 aa).

K206 carries the post-translational modification N6-(pyridoxal phosphate)lysine. Residue C365 is part of the active site. The region spanning 558–705 (QWLENALDMT…VEAGSAVRFF (148 aa)) is the MOSC domain.

This sequence belongs to the class-V pyridoxal-phosphate-dependent aminotransferase family. MOCOS subfamily. Pyridoxal 5'-phosphate serves as cofactor.

The enzyme catalyses Mo-molybdopterin + L-cysteine + AH2 = thio-Mo-molybdopterin + L-alanine + A + H2O. The protein operates within cofactor biosynthesis; molybdopterin biosynthesis. Sulfurates the molybdenum cofactor. Sulfation of molybdenum is essential for xanthine dehydrogenase (XDH) and aldehyde oxidase (ADO) enzymes in which molybdenum cofactor is liganded by 1 oxygen and 1 sulfur atom in active form. This Caenorhabditis briggsae protein is Molybdenum cofactor sulfurase (mocs-1).